We begin with the raw amino-acid sequence, 372 residues long: Galanin receptor type 2 (372 aa).

The Extracellular portion of the chain corresponds to 1-28 (MNGSGSQGAENTSQEGGSGGWQPEAVLV). N-linked (GlcNAc...) asparagine glycosylation is found at Asn2 and Asn11. A helical transmembrane segment spans residues 29 to 49 (PLFFALIFLVGTVGNALVLAV). Residues 50-60 (LLRGGQAVSTT) are Cytoplasmic-facing. A helical transmembrane segment spans residues 61–81 (NLFILNLGVADLCFILCCVPF). Residues 82 to 99 (QATIYTLDDWVFGSLLCK) are Extracellular-facing. Cysteines 98 and 175 form a disulfide. A helical transmembrane segment spans residues 100–121 (AVHFLIFLTMHASSFTLAAVSL). Residues 122–141 (DRYLAIRYPLHSRELRTPRN) lie on the Cytoplasmic side of the membrane. Residues 142–162 (ALAAIGLIWGLALLFSGPYLS) form a helical membrane-spanning segment. Residues 163–187 (YYRQSQLANLTVCHPAWSAPRRRAM) are Extracellular-facing. Residues 188 to 208 (DLCTFVFSYLLPVLVLSLTYA) traverse the membrane as a helical segment. The Cytoplasmic segment spans residues 209 to 237 (RTLRYLWRTVDPVTAGSGSQRAKRKVTRM). A helical membrane pass occupies residues 238–258 (IIIVAVLFCLCWMPHHALILC). Residues 259–260 (VW) are Extracellular-facing. The helical transmembrane segment at 261-281 (FGRFPLTRATYALRILSHLVS) threads the bilayer. The Cytoplasmic segment spans residues 282–372 (YANSCVNPIV…ASSRTLDPAC (91 aa)). A disordered region spans residues 353-372 (VPPPALPNCTASSRTLDPAC). Residues 361-372 (CTASSRTLDPAC) are compositionally biased toward polar residues.

The protein belongs to the G-protein coupled receptor 1 family.

It is found in the cell membrane. Receptor for the hormone galanin, GALP and spexin-1. The activity of this receptor is mediated by G proteins that activate the phospholipase C/protein kinase C pathway (via G(q)) and that inhibit adenylyl cyclase (via G(i)). The chain is Galanin receptor type 2 (Galr2) from Rattus norvegicus (Rat).